The sequence spans 448 residues: SVP1-like protein 2 (448 aa).

6 N-linked (GlcNAc...) asparagine glycosylation sites follow: Asn-61, Asn-155, Asn-256, Asn-280, Asn-315, and Asn-421. 2 WD repeats span residues 222–262 (AHKN…LIKE) and 267–306 (VDKA…NTET). A disordered region spans residues 416–435 (THYSLNESLRNEDTKSAGEP). Residues 424–435 (LRNEDTKSAGEP) show a composition bias toward basic and acidic residues.

This sequence belongs to the WD repeat PROPPIN family. N-glycosylated.

The protein resides in the endosome membrane. Its subcellular location is the prevacuolar compartment membrane. Its function is as follows. Involved in piecemeal microautophagy of the nucleus (micronucleophagy). This is SVP1-like protein 2 (HSV2) from Saccharomyces cerevisiae (strain ATCC 204508 / S288c) (Baker's yeast).